Consider the following 351-residue polypeptide: Ribonucleoside-diphosphate reductase subunit M2 B (351 aa).

The interval 1–31 (MGDPERPEAAGLDQDERSSSDTNENEIKSNE) is disordered. Residues aspartate 100, glutamate 131, and histidine 134 each coordinate Fe cation. The active site involves tyrosine 138. Fe cation contacts are provided by glutamate 194, glutamate 228, and histidine 231.

It belongs to the ribonucleoside diphosphate reductase small chain family. In terms of assembly, heterotetramer with large (RRM1) subunit. Interacts with p53/TP53. Interacts with RRM1 in response to DNA damage. Fe cation serves as cofactor.

The protein localises to the cytoplasm. It is found in the nucleus. It catalyses the reaction a 2'-deoxyribonucleoside 5'-diphosphate + [thioredoxin]-disulfide + H2O = a ribonucleoside 5'-diphosphate + [thioredoxin]-dithiol. Plays a pivotal role in cell survival by repairing damaged DNA in a p53/TP53-dependent manner. Supplies deoxyribonucleotides for DNA repair in cells arrested at G1 or G2. Contains an iron-tyrosyl free radical center required for catalysis. Forms an active ribonucleotide reductase (RNR) complex with RRM1 which is expressed both in resting and proliferating cells in response to DNA damage. The chain is Ribonucleoside-diphosphate reductase subunit M2 B (RRM2B) from Pongo abelii (Sumatran orangutan).